The sequence spans 485 residues: Auxin transporter protein 1 (485 aa).

Topologically, residues 1 to 59 (MSEGVEAIVANDNGTDQVNGNRTGKDNEEHDGSTGSNLSNFLWHGGSVWDAWFSCASNQ) are cytoplasmic. Positions 12–22 (DNGTDQVNGNR) are enriched in polar residues. A disordered region spans residues 12–33 (DNGTDQVNGNRTGKDNEEHDGS). Over residues 23–32 (TGKDNEEHDG) the composition is skewed to basic and acidic residues. A helical transmembrane segment spans residues 60-77 (VAQVLLTLPYSFSQLGML). The Extracellular segment spans residues 78 to 79 (SG). A helical transmembrane segment spans residues 80–100 (IVLQIFYGLLGSWTAYLISVL). Over 101-135 (YVEYRARKEKEGKSFKNHVIQWFEVLDGLLGSYWK) the chain is Cytoplasmic. Residues 136-156 (ALGLAFNCTFLLFGSVIQLIA) form a helical membrane-spanning segment. The Extracellular portion of the chain corresponds to 157–172 (CASNIYYINDHLDKRT). The chain crosses the membrane as a helical span at residues 173–193 (WTYIFGACCATTVFIPSFHNY). The Cytoplasmic segment spans residues 194–196 (RIW). The chain crosses the membrane as a helical span at residues 197–217 (SFLGLGMTTYTAWYLAIASII). Residues 218-232 (HGQAEGVKHSGPTKL) are Extracellular-facing. Residues 233 to 253 (VLYFTGATNILYTFGGHAVTV) traverse the membrane as a helical segment. The Cytoplasmic segment spans residues 254–266 (EIMHAMWKPQKFK). The helical transmembrane segment at 267 to 287 (YIYLMATLYVFTLTIPSAAAV) threads the bilayer. Topologically, residues 288–314 (YWAFGDALLDHSNAFSLMPKNAWRDAA) are extracellular. Residues 315–335 (VILMLIHQFITFGFACTPLYF) form a helical membrane-spanning segment. At 336–356 (VWEKVIGMHDTKSICLRALAR) the chain is on the cytoplasmic side. A helical membrane pass occupies residues 357–377 (LPVVIPIWFLAIIFPFFGPIN). Serine 378 is a topological domain (extracellular). The helical transmembrane segment at 379 to 399 (AVGALLVSFTVYIIPSLAHML) threads the bilayer. At 400–425 (TYRSASARQNAAEKPPFFMPSWTAMY) the chain is on the cytoplasmic side. Residues 426–446 (VLNAFVVVWVLIVGFGFGGWA) form a helical membrane-spanning segment. The Extracellular segment spans residues 447–485 (SVTNFVRQVDTFGLFAKCYQCKPAAAAAHAPVSALHHRL).

Belongs to the amino acid/polyamine transporter 2 family. Amino acid/auxin permease (AAAP) (TC 2.A.18.1) subfamily. As to expression, expressed in root and shoot apical tissues. In root apex, confined to stele initials, protophloem poles, statolith-containing S2 columella cells, lateral root cap cells (LRC), and in epidermal cells from the distal elongation zone (DEZ) up to central elongation zone (CEZ).

The protein resides in the cell membrane. Its activity is regulated as follows. Auxin uptake mediated by AUX1 is inhibited by chromosaponin-1 (CSI), 1-naphthoxyacetic acid (1-NOA) and 3-chloro-4-hydroxyphenylacetic acid (CHPAA). In terms of biological role, carrier protein involved in proton-driven auxin influx. Mediates the formation of auxin gradient from developing leaves (site of auxin biosynthesis) to tips by contributing to the loading of auxin in vascular tissues and facilitating acropetal (base to tip) auxin transport within inner tissues of the root apex, and basipetal (tip to base) auxin transport within outer tissues of the root apex. Unloads auxin from the mature phloem to deliver the hormone to the root meristem via the protophloem cell files. Coordinated subcellular localization of AUX1 is regulated by a brefeldin A-sensitive (BFA) vesicle trafficking process. Involved in lateral root formation, trichoblast polarization and root hair elongation. Required for gravitropism and thigmotropism, especially in roots, by modulating responses to auxin, ethylene and cytokinins such as benzyladenine (BA). Needed for ammonium-mediated root-growth inhibition. Confers sensitivity to the herbicide 2,4-dichlorophenoxyacetic acid (2,4-D, auxin analog), and to polar auxin transport inhibitors such as N-1-naphthylphthalamic acid (NPA) and 2,3,5-triiodobenzoic acid (TIBA). This is Auxin transporter protein 1 (AUX1) from Arabidopsis thaliana (Mouse-ear cress).